The following is a 99-amino-acid chain: SVVKREDFSLPAYVDRRDYPLPDVAHVKHLSASQKALKEKEKASWSSLSMDEKVELYRIKFKETFAEMNRGSNEWKTVVGTATFFIGFTALIIMWQKRY.

Over 1-73 (SVVKREDFSL…TFAEMNRGSN (73 aa)) the chain is Mitochondrial matrix. Lys-4 bears the N6-acetyllysine; alternate mark. The residue at position 4 (Lys-4) is an N6-succinyllysine; alternate. Lys-28 carries the N6-acetyllysine modification. Ser-31 and Ser-33 each carry phosphoserine. N6-acetyllysine; alternate is present on Lys-35. Lys-35 is modified (N6-succinyllysine; alternate). Lys-42 bears the N6-acetyllysine mark. The helical transmembrane segment at 74-99 (EWKTVVGTATFFIGFTALIIMWQKRY) threads the bilayer.

This sequence belongs to the cytochrome c oxidase IV family. As to quaternary structure, component of the cytochrome c oxidase (complex IV, CIV), a multisubunit enzyme composed of 14 subunits. The complex is composed of a catalytic core of 3 subunits MT-CO1, MT-CO2 and MT-CO3, encoded in the mitochondrial DNA, and 11 supernumerary subunits COX4I, COX5A, COX5B, COX6A, COX6B, COX6C, COX7A, COX7B, COX7C, COX8 and NDUFA4, which are encoded in the nuclear genome. The complex exists as a monomer or a dimer and forms supercomplexes (SCs) in the inner mitochondrial membrane with NADH-ubiquinone oxidoreductase (complex I, CI) and ubiquinol-cytochrome c oxidoreductase (cytochrome b-c1 complex, complex III, CIII), resulting in different assemblies (supercomplex SCI(1)III(2)IV(1) and megacomplex MCI(2)III(2)IV(2)). Interacts with PHB2; the interaction decreases in absence of SPHK2. Interacts with AFG1L. Interacts with ABCB7; this interaction allows the regulation of cellular iron homeostasis and cellular reactive oxygen species (ROS) levels in cardiomyocytes. Interacts with FLVCR2; this interaction occurs in the absence of heme and is disrupted upon heme binding. Interacts with IRGC.

The protein localises to the mitochondrion inner membrane. The protein operates within energy metabolism; oxidative phosphorylation. Functionally, component of the cytochrome c oxidase, the last enzyme in the mitochondrial electron transport chain which drives oxidative phosphorylation. The respiratory chain contains 3 multisubunit complexes succinate dehydrogenase (complex II, CII), ubiquinol-cytochrome c oxidoreductase (cytochrome b-c1 complex, complex III, CIII) and cytochrome c oxidase (complex IV, CIV), that cooperate to transfer electrons derived from NADH and succinate to molecular oxygen, creating an electrochemical gradient over the inner membrane that drives transmembrane transport and the ATP synthase. Cytochrome c oxidase is the component of the respiratory chain that catalyzes the reduction of oxygen to water. Electrons originating from reduced cytochrome c in the intermembrane space (IMS) are transferred via the dinuclear copper A center (CU(A)) of subunit 2 and heme A of subunit 1 to the active site in subunit 1, a binuclear center (BNC) formed by heme A3 and copper B (CU(B)). The BNC reduces molecular oxygen to 2 water molecules using 4 electrons from cytochrome c in the IMS and 4 protons from the mitochondrial matrix. The sequence is that of Cytochrome c oxidase subunit 4 isoform 1, mitochondrial (COX4I1) from Trachypithecus cristatus (Silvered leaf-monkey).